Here is a 351-residue protein sequence, read N- to C-terminus: MAEAKTCNMEVSCALPEGSVKPNAEDMTSKDYYFDSYAHFGIHEEMLKDEVRTLTYRNSMFHNRHLFKDKVVLDVGSGTGILCMFAAKAGAKKVIGIECSSISDYAIKIVKANKLDHVVTIIKGKVEEVELPVEKVDIIISEWMGYCLFYESMLNTVIYARDKWLNPDGLIFPDRATLYVTAIEDRQYKDYKIHWWENVYGFDMSCIKDVAIKEPLVDVVDPKQLVSNACLIKEVDIYTVKVDDLTFTSPFCLQVKRNDYIHAMVAYFNIEFTRCHKRTGFSTSPESPYTHWKQTVFYMEDYLTVKTGEEIFGTISMKPNAKNNRDLDFTVDIDFKGQLCELSCSTDYRMR.

The SAM-dependent MTase PRMT-type domain maps to 30–331; it reads KDYYFDSYAH…KNNRDLDFTV (302 aa). Positions 43, 52, 76, 98, and 127 each coordinate S-adenosyl-L-methionine. Active-site residues include E142 and E151.

The protein belongs to the class I-like SAM-binding methyltransferase superfamily. Protein arginine N-methyltransferase family. As to quaternary structure, homodimer. Homooctamer; individual homodimers associates to form a homooctamer and homooligomerization is required for proper localization to the cell membrane. Individual homodimers can associate to form a homohexamer. Component of a complex with lsm14a/rap55a. Interacts with cirbp. In terms of tissue distribution, from the onset of gastrulation, expressed in dorsal mesoderm, and in dorsal and ventral ectoderm. At the neurula and tail bud stages, expression is restricted to the neuroectoderm, with highest expression in the anterior neural plate.

It localises to the nucleus. The protein localises to the nucleoplasm. It is found in the cytoplasm. The protein resides in the cytosol. The catalysed reaction is L-arginyl-[protein] + 2 S-adenosyl-L-methionine = N(omega),N(omega)-dimethyl-L-arginyl-[protein] + 2 S-adenosyl-L-homocysteine + 2 H(+). The enzyme catalyses L-arginyl-[protein] + S-adenosyl-L-methionine = N(omega)-methyl-L-arginyl-[protein] + S-adenosyl-L-homocysteine + H(+). It carries out the reaction N(omega)-methyl-L-arginyl-[protein] + S-adenosyl-L-methionine = N(omega),N(omega)-dimethyl-L-arginyl-[protein] + S-adenosyl-L-homocysteine + H(+). In terms of biological role, arginine methyltransferase that methylates (mono and asymmetric dimethylation) the guanidino nitrogens of arginyl residues present in target proteins. Constitutes the main enzyme that mediates monomethylation and asymmetric dimethylation of histone H4 'Arg-4' (H4R3me1 and H4R3me2a, respectively), a specific tag for epigenetic transcriptional activation. Methylates ilf3 to regulate its DNA-binding activity. Required for neural induction, playing a key role in the control of epidermal versus neural cell fate choice. The sequence is that of Protein arginine N-methyltransferase 1-B (prmt1-b) from Xenopus laevis (African clawed frog).